Here is a 121-residue protein sequence, read N- to C-terminus: Ribosome-binding factor A (121 aa).

Belongs to the RbfA family. In terms of assembly, monomer. Binds 30S ribosomal subunits, but not 50S ribosomal subunits or 70S ribosomes.

The protein resides in the cytoplasm. Functionally, one of several proteins that assist in the late maturation steps of the functional core of the 30S ribosomal subunit. Associates with free 30S ribosomal subunits (but not with 30S subunits that are part of 70S ribosomes or polysomes). Required for efficient processing of 16S rRNA. May interact with the 5'-terminal helix region of 16S rRNA. This Clostridium novyi (strain NT) protein is Ribosome-binding factor A.